The sequence spans 137 residues: Ribosome-binding factor A (137 aa).

Belongs to the RbfA family. In terms of assembly, monomer. Binds 30S ribosomal subunits, but not 50S ribosomal subunits or 70S ribosomes.

It is found in the cytoplasm. One of several proteins that assist in the late maturation steps of the functional core of the 30S ribosomal subunit. Associates with free 30S ribosomal subunits (but not with 30S subunits that are part of 70S ribosomes or polysomes). Required for efficient processing of 16S rRNA. May interact with the 5'-terminal helix region of 16S rRNA. The protein is Ribosome-binding factor A of Rhodopseudomonas palustris (strain TIE-1).